We begin with the raw amino-acid sequence, 208 residues long: Probable splicing factor, arginine/serine-rich 5 (208 aa).

In terms of domain architecture, RRM spans 2-74 (PRLYLGKIPY…MRLVVEMARG (73 aa)). Residues 71-208 (MARGKPRGND…RSPSPGSPKD (138 aa)) are disordered. Basic residues predominate over residues 84–123 (SRSPRRRSRSPRRRSRTPPRRRSRSRDRKRSRRSRSRSSS). Residues 128-153 (PVRESRRRSESRSPSPKRDLKREASR) are compositionally biased toward basic and acidic residues.

The protein belongs to the splicing factor SR family. Extensively phosphorylated on serine residues in the RS domain.

Its subcellular location is the nucleus. Its function is as follows. Plays a functionally redundant role in shifting germ cell sexual differentiation in hermaphrodites. The sequence is that of Probable splicing factor, arginine/serine-rich 5 (rsp-5) from Caenorhabditis elegans.